Here is a 405-residue protein sequence, read N- to C-terminus: L-rhamnonate dehydratase (405 aa).

Residues His33 and Arg59 each coordinate substrate. Asp226, Glu252, and Glu280 together coordinate Mg(2+). Residue His329 is the Proton acceptor of the active site. Glu349 lines the substrate pocket.

The protein belongs to the mandelate racemase/muconate lactonizing enzyme family. RhamD subfamily. Homooctamer; tetramer of dimers. Mg(2+) is required as a cofactor.

The catalysed reaction is L-rhamnonate = 2-dehydro-3-deoxy-L-rhamnonate + H2O. Functionally, catalyzes the dehydration of L-rhamnonate to 2-keto-3-deoxy-L-rhamnonate (KDR). The polypeptide is L-rhamnonate dehydratase (Escherichia coli O6:K15:H31 (strain 536 / UPEC)).